The chain runs to 115 residues: Cell division protein FtsL (115 aa).

The Cytoplasmic segment spans residues 1–25; the sequence is MNTATRVIVAQNVRTRNRTFQITKQ. The helical transmembrane segment at 26–46 threads the bilayer; sequence GVVIVALVIALLCSAFGVVYF. Topologically, residues 47–115 are periplasmic; that stretch reads KDLNRRLFIQ…ILVNADAMIE (69 aa).

This sequence belongs to the FtsL family. In terms of assembly, part of a complex composed of FtsB, FtsL and FtsQ.

The protein localises to the cell inner membrane. Its function is as follows. Essential cell division protein. May link together the upstream cell division proteins, which are predominantly cytoplasmic, with the downstream cell division proteins, which are predominantly periplasmic. The protein is Cell division protein FtsL of Coxiella burnetii (strain RSA 493 / Nine Mile phase I).